The following is a 355-amino-acid chain: Zinc finger protein CONSTANS-LIKE 1 (355 aa).

8 residues coordinate Zn(2+): cysteine 12, cysteine 15, cysteine 35, histidine 40, cysteine 55, cysteine 58, cysteine 78, and histidine 83. The B box-type 1; atypical zinc-finger motif lies at 12–54 (CDTCRSAACTVYCRADSAYLCSSCDAQVHAANRLASRHERVRV). The segment at 55–97 (CQSCERAPAAFFCKADAASLCTTCDSEIHSANPLARRHQRVPI) adopts a B box-type 2; atypical zinc-finger fold. The span at 252–264 (ESTTSDATVSNPR) shows a compositional bias: polar residues. The segment at 252 to 281 (ESTTSDATVSNPRSPKAVTDQPPYPPAQML) is disordered. The region spanning 286–328 (REARVLRYREKKKMRKFEKTIRYASRKAYAEKRPRIKGRFAKK) is the CCT domain.

It belongs to the CONSTANS family. In terms of tissue distribution, highly expressed in leaves and at lower levels in stems, flowers and siliques. Not detected in roots.

It localises to the nucleus. Functionally, putative transcription factor that may be involved in the light input to the circadian clock but does not affect flowering time. This is Zinc finger protein CONSTANS-LIKE 1 (COL1) from Arabidopsis thaliana (Mouse-ear cress).